A 64-amino-acid polypeptide reads, in one-letter code: Copper-specific metallothionein-2 (64 aa).

The Cu(+) site is built by Cys-3, Cys-5, Cys-9, Cys-11, Cys-16, Cys-18, Cys-22, Cys-24, Cys-27, Cys-33, Cys-40, Cys-44, Cys-50, Cys-52, Cys-56, and Cys-58.

The protein belongs to the metallothionein superfamily. Type 2 family.

In terms of biological role, the metallothioneins are involved in the cellular sequestration of toxic metal ions and regulation of essential trace elements. This isoform binds exclusively copper. This is Copper-specific metallothionein-2 from Callinectes sapidus (Blue crab).